The chain runs to 353 residues: Photosystem II D2 protein (353 aa).

Residue T2 is modified to N-acetylthreonine. T2 bears the Phosphothreonine mark. The chain crosses the membrane as a helical span at residues 41–61 (CAYFALGGWFTGTTFVTSWYT). H118 contacts chlorophyll a. Residues 125 to 141 (GFMLRQFELARSVQLRP) form a helical membrane-spanning segment. Pheophytin a contacts are provided by Q130 and N143. A helical transmembrane segment spans residues 153-166 (VFVSVFLIYPLGQS). H198 serves as a coordination point for chlorophyll a. A helical membrane pass occupies residues 208 to 228 (AALLCAIHGATVENTLFEDGD). Residues H215 and F262 each coordinate a plastoquinone. Fe cation is bound at residue H215. Residue H269 participates in Fe cation binding. Residues 279–295 (GLWMSAIGVVGLALNLR) traverse the membrane as a helical segment.

This sequence belongs to the reaction center PufL/M/PsbA/D family. PSII is composed of 1 copy each of membrane proteins PsbA, PsbB, PsbC, PsbD, PsbE, PsbF, PsbH, PsbI, PsbJ, PsbK, PsbL, PsbM, PsbT, PsbX, PsbY, PsbZ, Psb30/Ycf12, at least 3 peripheral proteins of the oxygen-evolving complex and a large number of cofactors. It forms dimeric complexes. The cofactor is The D1/D2 heterodimer binds P680, chlorophylls that are the primary electron donor of PSII, and subsequent electron acceptors. It shares a non-heme iron and each subunit binds pheophytin, quinone, additional chlorophylls, carotenoids and lipids. There is also a Cl(-1) ion associated with D1 and D2, which is required for oxygen evolution. The PSII complex binds additional chlorophylls, carotenoids and specific lipids..

It is found in the plastid. It localises to the chloroplast thylakoid membrane. The catalysed reaction is 2 a plastoquinone + 4 hnu + 2 H2O = 2 a plastoquinol + O2. Functionally, photosystem II (PSII) is a light-driven water:plastoquinone oxidoreductase that uses light energy to abstract electrons from H(2)O, generating O(2) and a proton gradient subsequently used for ATP formation. It consists of a core antenna complex that captures photons, and an electron transfer chain that converts photonic excitation into a charge separation. The D1/D2 (PsbA/PsbD) reaction center heterodimer binds P680, the primary electron donor of PSII as well as several subsequent electron acceptors. D2 is needed for assembly of a stable PSII complex. The chain is Photosystem II D2 protein from Liriodendron tulipifera (Tuliptree).